The following is a 343-amino-acid chain: Dehydrodolichyl diphosphate synthase complex subunit SRT1 (343 aa).

It belongs to the UPP synthase family. As to quaternary structure, forms an active dehydrodolichyl diphosphate synthase complex with NUS1. It depends on Mg(2+) as a cofactor.

The protein resides in the lipid droplet. It carries out the reaction n isopentenyl diphosphate + (2E,6E)-farnesyl diphosphate = a di-trans,poly-cis-polyprenyl diphosphate + n diphosphate. It functions in the pathway protein modification; protein glycosylation. Functionally, with NUS1, forms the dehydrodolichyl diphosphate synthase (DDS) complex, an essential component of the dolichol monophosphate (Dol-P) biosynthetic machinery. Adds multiple copies of isopentenyl pyrophosphate (IPP) to farnesyl pyrophosphate (FPP) to produce dehydrodolichyl diphosphate (Dedol-PP), a precursor of dolichol which is utilized as a sugar carrier in protein glycosylation in the endoplasmic reticulum (ER). The chain is Dehydrodolichyl diphosphate synthase complex subunit SRT1 from Saccharomyces cerevisiae (strain ATCC 204508 / S288c) (Baker's yeast).